Consider the following 609-residue polypeptide: Beta-(1--&gt;2)glucan export ATP-binding/permease protein NdvA (609 aa).

Residues 21-311 (GWILAGANLL…VVSFINSVFM (291 aa)) form the ABC transmembrane type-1 domain. 6 helical membrane passes run 22-42 (WILA…PVLF), 68-88 (LLAV…TVAL), 146-166 (EHFA…YINW), 167-187 (RLAI…TLVV), 248-268 (WWAV…LAIF), and 285-305 (IVMF…VVSF). The ABC transporter domain maps to 345–579 (VEFNDVSFSY…GGHFAQLAKA (235 aa)). An ATP-binding site is contributed by 378-385 (GPTGAGKS).

This sequence belongs to the ABC transporter superfamily. Beta-(1--&gt;2)glucan exporter (TC 3.A.1.108.1) family. In terms of assembly, homodimer.

Its subcellular location is the cell inner membrane. It carries out the reaction [(1-&gt;2)-beta-D-glucosyl](n)(in) + ATP + H2O = [(1-&gt;2)-beta-D-glucosyl](n)(out) + ADP + phosphate + H(+). Functionally, involved in beta-(1--&gt;2)glucan export. Transmembrane domains (TMD) form a pore in the inner membrane and the ATP-binding domain (NBD) is responsible for energy generation. This is Beta-(1--&gt;2)glucan export ATP-binding/permease protein NdvA from Nitrobacter winogradskyi (strain ATCC 25391 / DSM 10237 / CIP 104748 / NCIMB 11846 / Nb-255).